The following is a 180-amino-acid chain: UPF0227 protein CKO_01948 (180 aa).

It belongs to the UPF0227 family.

This chain is UPF0227 protein CKO_01948, found in Citrobacter koseri (strain ATCC BAA-895 / CDC 4225-83 / SGSC4696).